The chain runs to 549 residues: Urocanate hydratase (549 aa).

Residues Gly-46–Gly-47, Gln-124, Glu-190, Arg-195, Asn-236–Ala-237, Gln-257–His-261, Tyr-267–Val-268, and Tyr-316 each bind NAD(+). The active site involves Cys-404. Gly-486 contributes to the NAD(+) binding site.

Belongs to the urocanase family. It depends on NAD(+) as a cofactor.

The protein resides in the cytoplasm. The enzyme catalyses 4-imidazolone-5-propanoate = trans-urocanate + H2O. It participates in amino-acid degradation; L-histidine degradation into L-glutamate; N-formimidoyl-L-glutamate from L-histidine: step 2/3. Its function is as follows. Catalyzes the conversion of urocanate to 4-imidazolone-5-propionate. This is Urocanate hydratase from Thermoanaerobacter pseudethanolicus (strain ATCC 33223 / 39E) (Clostridium thermohydrosulfuricum).